The sequence spans 2429 residues: Highly reducing polyketide synthase acrA (2429 aa).

Residues 4-436 (PEPIAIVGMG…GTNAHAIIES (433 aa)) form the Ketosynthase family 3 (KS3) domain. Catalysis depends on for beta-ketoacyl synthase activity residues Cys177, His314, and His356. The segment at 541–861 (VFTGQGAQWP…PYSGTLSRGQ (321 aa)) is malonyl-CoA:ACP transacylase (MAT) domain. The tract at residues 931-1068 (HPLLGVRSTE…GTVRVVLGPA (138 aa)) is N-terminal hotdog fold. The tract at residues 931-1229 (HPLLGVRSTE…RCSSLTPPGP (299 aa)) is dehydratase (DH) domain. The PKS/mFAS DH domain occupies 931–1230 (HPLLGVRSTE…CSSLTPPGPR (300 aa)). The Proton acceptor; for dehydratase activity role is filled by His963. The segment at 1082-1230 (VFHEVKTERF…CSSLTPPGPR (149 aa)) is C-terminal hotdog fold. The Proton donor; for dehydratase activity role is filled by Asp1141. A methyltransferase (MT) domain region spans residues 1388-1577 (NGYMGRVAGQ…VNDFVDESKY (190 aa)). The ketoreductase (KR) domain stretch occupies residues 2065–2235 (TYLLVGCTGG…ARGLAASVFH (171 aa)). The Carrier domain occupies 2351–2428 (EVDGVIQEAF…ELCREAASEV (78 aa)). Ser2388 is subject to O-(pantetheine 4'-phosphoryl)serine.

It participates in secondary metabolite biosynthesis. Its function is as follows. Highly reducing polyketide synthase; part of the cluster that mediates the biosynthesis of acurin A, a highly reduced polyketide coupled to a serine via a peptide bond. The activities of the highly reducing polyketide synthase acrA and the nonribosomal peptide synthetase acrB are collectively responsible for the synthesis of the acurin A core structure with a heptaketide backbone produced by acrA covalently fused to a L-serine by acrB. After the formation of the PK-NRP hybrid product, it is detached from acrB by reductive release to set up the formation of the lactam ring by aldol condensation. The hydrolyase acrC then catalyzes water loss to generate a double bond in the ring. This double bond is probably reduced, which is followed by three oxidations at C-22 to generate the carboxylic acid moiety, involving probably the FAD-binding monooxygenase acrE and the cytochrome P450 monooxygenases acrD and acrF. Finally, a last methylation step performed by the O-methyltransferase acrG leads to the production of acurin A. The protein is Highly reducing polyketide synthase acrA of Aspergillus aculeatus (strain ATCC 16872 / CBS 172.66 / WB 5094).